A 223-amino-acid polypeptide reads, in one-letter code: Leucyl/phenylalanyl-tRNA--protein transferase (223 aa).

This sequence belongs to the L/F-transferase family.

It localises to the cytoplasm. It carries out the reaction N-terminal L-lysyl-[protein] + L-leucyl-tRNA(Leu) = N-terminal L-leucyl-L-lysyl-[protein] + tRNA(Leu) + H(+). The catalysed reaction is N-terminal L-arginyl-[protein] + L-leucyl-tRNA(Leu) = N-terminal L-leucyl-L-arginyl-[protein] + tRNA(Leu) + H(+). The enzyme catalyses L-phenylalanyl-tRNA(Phe) + an N-terminal L-alpha-aminoacyl-[protein] = an N-terminal L-phenylalanyl-L-alpha-aminoacyl-[protein] + tRNA(Phe). Functionally, functions in the N-end rule pathway of protein degradation where it conjugates Leu, Phe and, less efficiently, Met from aminoacyl-tRNAs to the N-termini of proteins containing an N-terminal arginine or lysine. This chain is Leucyl/phenylalanyl-tRNA--protein transferase, found in Dinoroseobacter shibae (strain DSM 16493 / NCIMB 14021 / DFL 12).